We begin with the raw amino-acid sequence, 362 residues long: Dihydroorotate dehydrogenase (quinone) (362 aa).

Residues 62–66 (AGYDK) and Thr-86 each bind FMN. Lys-66 contacts substrate. 111–115 (NRLGF) is a binding site for substrate. FMN contacts are provided by Asn-139 and Asn-170. Asn-170 lines the substrate pocket. Ser-173 functions as the Nucleophile in the catalytic mechanism. Asn-175 is a binding site for substrate. Positions 215 and 243 each coordinate FMN. 244 to 245 (NT) contacts substrate. Residues Gly-266, Gly-295, and 316 to 317 (YS) each bind FMN.

This sequence belongs to the dihydroorotate dehydrogenase family. Type 2 subfamily. Monomer. It depends on FMN as a cofactor.

The protein resides in the cell membrane. It carries out the reaction (S)-dihydroorotate + a quinone = orotate + a quinol. It functions in the pathway pyrimidine metabolism; UMP biosynthesis via de novo pathway; orotate from (S)-dihydroorotate (quinone route): step 1/1. Functionally, catalyzes the conversion of dihydroorotate to orotate with quinone as electron acceptor. The protein is Dihydroorotate dehydrogenase (quinone) of Rhizobium leguminosarum bv. trifolii (strain WSM2304).